The following is a 283-amino-acid chain: Ribosomal RNA small subunit methyltransferase A (283 aa).

S-adenosyl-L-methionine is bound by residues Asn13, Leu15, Gly39, Glu59, Asp87, and Asn108.

The protein belongs to the class I-like SAM-binding methyltransferase superfamily. rRNA adenine N(6)-methyltransferase family. RsmA subfamily.

It is found in the cytoplasm. It carries out the reaction adenosine(1518)/adenosine(1519) in 16S rRNA + 4 S-adenosyl-L-methionine = N(6)-dimethyladenosine(1518)/N(6)-dimethyladenosine(1519) in 16S rRNA + 4 S-adenosyl-L-homocysteine + 4 H(+). Functionally, specifically dimethylates two adjacent adenosines (A1518 and A1519) in the loop of a conserved hairpin near the 3'-end of 16S rRNA in the 30S particle. May play a critical role in biogenesis of 30S subunits. The chain is Ribosomal RNA small subunit methyltransferase A from Helicobacter hepaticus (strain ATCC 51449 / 3B1).